The primary structure comprises 695 residues: Rho-related BTB domain-containing protein 1 (695 aa).

Residues 1–210 (MDSDMDYERP…DNAIRAALIS (210 aa)) form a rho-like region. GTP is bound by residues 21–28 (GDNAVGKT), 84–88 (DTFGD), and 140–143 (CQLD). BTB domains follow at residues 266-426 (ADVL…DEKE) and 484-551 (SDVT…SPNL). Residues 325–351 (SLGSAEEGKEGPQRTPQADPGASSGQD) form a disordered region.

The protein belongs to the small GTPase superfamily. Rho family. Highest expression in heart and testis.

In Mus musculus (Mouse), this protein is Rho-related BTB domain-containing protein 1 (Rhobtb1).